Consider the following 449-residue polypeptide: Gamma conglutin 1 (449 aa).

The signal sequence occupies residues 1 to 33 (MARNMAHILHILVISLSYSFLFVSSSSQDSQSL). A Peptidase A1 domain is found at 60–429 (HWANIHKRTP…DLERSRVGFN (370 aa)). Cystine bridges form between cysteine 88/cysteine 178, cysteine 102/cysteine 115, cysteine 107/cysteine 133, cysteine 118/cysteine 128, and cysteine 350/cysteine 391. The N-linked (GlcNAc...) asparagine glycan is linked to asparagine 130.

This sequence belongs to the peptidase A1 family. As to quaternary structure, two-subunit monomeric unit made of alpha and beta subunits coupled by disulfide bonds (at pH 4.5 and under non-reducing conditions). Can also form oligomers including dimer, tetramer and cyclic hexamer (trimer of dimers) (at pH &gt; 5.5). Component of globulins complexes which accumulate in seeds. Interacts with flavonoids (e.g. apigenin glucosides) present in globulins complexes. Forms a static complex with vitexin. Undergoes very complex post-translational maturation; the proteolytic processing leading to the formation of two alpha and beta subunits is incomplete, leaving a certain amount of the protein in an uncut form. Post-translationally, glycosylated on alpha chain. As to expression, expressed in developing cotyledons and in the embryonic axis of germinating seeds. Accumulates in seeds, especially in the protein bodies of developing cotyledonary cells (at protein level). Also detected, at low levels, in plumules and radicles.

It is found in the secreted. Its subcellular location is the extracellular space. In terms of biological role, sulfur-rich seed storage protein that remains undegraded at germination. The sequence is that of Gamma conglutin 1 from Lupinus angustifolius (Narrow-leaved blue lupine).